Here is a 258-residue protein sequence, read N- to C-terminus: MNYSYSFKEYIERFAKKVNSIDSEYFEFSSYIERMRTVFGLLIALICFSNVLCFLFIATWFSTKGFGQHYRALIFTLFIPFVTSLLANIIFINLNRAFREYFKISSKSRSFLVICAFSSLPIVNIWLMLWWVAMIKRFTSNYAFAIFDKYNGLTSGVFIFDFADNVNFEGKLVSFDNTKDTNRDFVHFYSEAKLKRDKITLQTNPIPHERMYVNRMYYQQKLSMGANQNSPSTAFANLKRYVEHKQQKIIKIKQFILT.

3 consecutive transmembrane segments (helical) span residues 38–58 (VFGLLIALICFSNVLCFLFIA), 72–92 (ALIFTLFIPFVTSLLANIIFI), and 111–131 (FLVICAFSSLPIVNIWLMLWW).

It localises to the cell membrane. This is an uncharacterized protein from Mycoplasma pneumoniae (strain ATCC 29342 / M129 / Subtype 1) (Mycoplasmoides pneumoniae).